Here is a 470-residue protein sequence, read N- to C-terminus: Protein escargot (470 aa).

The segment at Leu271 to Tyr309 is disordered. C2H2-type zinc fingers lie at residues Tyr309–His331, Phe344–His366, Cys370–His392, and Phe398–His420. A C2H2-type 5; atypical zinc finger spans residues Tyr426–Cys449. Residues Gly448–Pro470 form a disordered region.

It belongs to the snail C2H2-type zinc-finger protein family. As to expression, expression is complex and dynamic. In early embryogenesis, expression begins on the dorsal side of the embryo. Expressed in a pattern of longitudinal stripes early in germband elongation. Later in embryogenesis, expression is in cells that correspond to the wing, haltere, leg and genital imaginal disks and the abdominal histoblasts. In the embryonic leg disk, expression is restricted to imaginal cells. Also expressed in the central nervous system (CNS), tracheae and head of stage 14 embryos. CNS and tracheal expression decays during later stages, though head expression persists until late in embryogenesis. In third instar larvae, expression is seen in the brain and in regions of many imaginal tissues including the eye-antennal, wing, leg and haltere disks. Expressed in embryonic, larval and adult male germline stem cells and in the somatic cells of the embryonic gonads.

The protein localises to the nucleus. Functionally, transcription factor that can both stimulate and repress transcription. Binds to the consensus DNA sequence 5'-A/GCAGGTG-3'. Regulates cell motility and adhesion during tracheal morphogenesis by stimulating transcription of the DE-cadherin gene shg at branch tips, thereby promoting tracheal tube fusion. Maintains diploidy in imaginal cells by inhibiting the transcription of genes required for endoreplication. Required for development of the genital disk and acts as an intrinsic determinant of wing cell fate. The somatic protein is required for maintenance of male germ cells. Acts with other members of the snail protein family to control embryonic central nervous system development. This Drosophila melanogaster (Fruit fly) protein is Protein escargot (esg).